Consider the following 958-residue polypeptide: Voltage-gated inwardly rectifying potassium channel KCNH6 (958 aa).

Over 1–261 (MPVRRGHVAP…YSPFKAVWDW (261 aa)) the chain is Cytoplasmic. Residues 41–70 (IIYCNDGFCELFGYSRVEVMQQPCTCDFLT) enclose the PAS domain. A PAC domain is found at 92-144 (CKVDILYYRKDASSFRCLVDVVPVKNEDGAVIMFILNFEDLAQLLAKCSSRSL). The chain crosses the membrane as a helical span at residues 262-282 (LILLLVIYTAVFTPYSAAFLL). Residues 283–298 (SDQDESRRGACSYTCS) lie on the Extracellular side of the membrane. A helical transmembrane segment spans residues 299 to 319 (PLTVVDLIVDIMFVVDIVINF). Residues 320-340 (RTTYVNTNDEVVSHPRRIAVH) are Cytoplasmic-facing. A helical transmembrane segment spans residues 341–361 (YFKGWFLIDMVAAIPFDLLIF). Residues 362 to 370 (RTGSDETTT) lie on the Extracellular side of the membrane. The chain crosses the membrane as a helical; Voltage-sensor span at residues 371 to 391 (LIGLLKTARLLRLVRVARKLD). Topologically, residues 392–398 (RYSEYGA) are cytoplasmic. The helical transmembrane segment at 399–419 (AVLFLLMCTFALIAHWLACIW) threads the bilayer. Over 420-463 (YAIGNVERPYLEHKIGWLDSLGVQLGKRYNGSDPASGPSVQDKY) the chain is Extracellular. N-linked (GlcNAc...) (complex) asparagine glycosylation occurs at Asn449. An intramembrane region (pore-forming) is located at residues 464–484 (VTALYFTFSSLTSVGFGNVSP). A Selectivity filter motif is present at residues 476–481 (SVGFGN). Topologically, residues 485 to 490 (NTNSEK) are extracellular. The chain crosses the membrane as a helical span at residues 491–511 (VFSICVMLIGSLMYASIFGNV). Topologically, residues 512–958 (SAIIQRLYSG…DPGFAGSWGH (447 aa)) are cytoplasmic. A cNMP-binding domain region spans residues 594 to 694 (AFSGAGKGCL…IQRADLLEVL (101 aa)). Disordered stretches follow at residues 720–751 (GLHS…PPLS) and 845–910 (TTSP…PPLA). The segment covering 724–745 (SPRQAPGSQDHQGFFLSDNQSD) has biased composition (polar residues).

The protein belongs to the potassium channel family. H (Eag) (TC 1.A.1.20) subfamily. Kv11.2/KCNH6 sub-subfamily. The potassium channel is probably composed of a homo- or heterotetrameric complex of pore-forming alpha subunits that can associate only within their subfamily. As to expression, expressed in prolactin-secreting adenomas.

It is found in the cell membrane. The enzyme catalyses K(+)(in) = K(+)(out). Functionally, pore-forming (alpha) subunit of voltage-gated inwardly rectifying potassium channel. Characterized by unusual gating kinetics by producing relatively small outward currents during membrane depolarization and large inward currents during subsequent repolarization which reflect a rapid inactivation during depolarization and quick recovery from inactivation but slow deactivation (closing) during repolarization. Activates even more slowly than KCNH2. This is Voltage-gated inwardly rectifying potassium channel KCNH6 from Homo sapiens (Human).